Reading from the N-terminus, the 328-residue chain is D-cysteine desulfhydrase (328 aa).

K51 carries the post-translational modification N6-(pyridoxal phosphate)lysine.

It belongs to the ACC deaminase/D-cysteine desulfhydrase family. As to quaternary structure, homodimer. Requires pyridoxal 5'-phosphate as cofactor.

The catalysed reaction is D-cysteine + H2O = hydrogen sulfide + pyruvate + NH4(+) + H(+). In terms of biological role, catalyzes the alpha,beta-elimination reaction of D-cysteine and of several D-cysteine derivatives. It could be a defense mechanism against D-cysteine. The polypeptide is D-cysteine desulfhydrase (Salmonella schwarzengrund (strain CVM19633)).